The sequence spans 862 residues: Valine--tRNA ligase (862 aa).

Positions 47–57 (PTASGSLHIGH) match the 'HIGH' region motif. A disordered region spans residues 110-130 (EPGLTPPFEGGDNKSSKAADQ). Basic and acidic residues predominate over residues 120–129 (GDNKSSKAAD). Residues 584 to 588 (KMSKS) carry the 'KMSKS' region motif. ATP is bound at residue Lys587.

Belongs to the class-I aminoacyl-tRNA synthetase family. ValS type 2 subfamily. In terms of assembly, monomer.

It is found in the cytoplasm. It catalyses the reaction tRNA(Val) + L-valine + ATP = L-valyl-tRNA(Val) + AMP + diphosphate. Its function is as follows. Catalyzes the attachment of valine to tRNA(Val). As ValRS can inadvertently accommodate and process structurally similar amino acids such as threonine, to avoid such errors, it has a 'posttransfer' editing activity that hydrolyzes mischarged Thr-tRNA(Val) in a tRNA-dependent manner. The protein is Valine--tRNA ligase of Leifsonia xyli subsp. xyli (strain CTCB07).